The chain runs to 169 residues: Glycine-rich RNA-binding protein GRP2A (169 aa).

One can recognise an RRM domain in the interval 8-86 (YRCFVGGLAW…RSITVNEAQS (79 aa)). Disordered stretches follow at residues 69–100 (MNGQ…GGGG) and 125–169 (YSGG…GGGW). The segment covering 89 to 100 (SGAGGGGRGGGG) has biased composition (gly residues).

In terms of tissue distribution, predominantly expressed in meristematic and growing tissue.

The protein resides in the nucleus. Functionally, may play a general role in circadian phenomena associated with meristematic tissue. This is Glycine-rich RNA-binding protein GRP2A from Sinapis alba (White mustard).